Consider the following 760-residue polypeptide: Serine/threonine-protein kinase PknG (760 aa).

Positions 1–31 (MTSPENPDLPDADDAYVDSGPGTQPASLEDL) are disordered. The Protein kinase domain occupies 161–403 (YEIKGCIAHG…SAEEMSSQLL (243 aa)). Residues 167–175 (IAHGGLGWV) and Lys191 contribute to the ATP site. Asp286 (proton acceptor) is an active-site residue.

Belongs to the protein kinase superfamily. Ser/Thr protein kinase family. In terms of assembly, interacts with GarA in vitro.

The catalysed reaction is L-seryl-[protein] + ATP = O-phospho-L-seryl-[protein] + ADP + H(+). The enzyme catalyses L-threonyl-[protein] + ATP = O-phospho-L-threonyl-[protein] + ADP + H(+). The polypeptide is Serine/threonine-protein kinase PknG (pknG) (Mycolicibacterium smegmatis (strain ATCC 700084 / mc(2)155) (Mycobacterium smegmatis)).